Consider the following 344-residue polypeptide: 2,3,4,5-tetrahydropyridine-2,6-dicarboxylate N-succinyltransferase (344 aa).

E205 lines the Mg(2+) pocket. Catalysis depends on E221, which acts as the Acyl-anhydride intermediate. Residues R223, G238, S241, A264, 279–280 (EA), G287, K304, and 317–320 (RRNS) contribute to the succinyl-CoA site.

It belongs to the type 2 tetrahydrodipicolinate N-succinyltransferase family. As to quaternary structure, homotrimer.

It is found in the cytoplasm. The enzyme catalyses (S)-2,3,4,5-tetrahydrodipicolinate + succinyl-CoA + H2O = (S)-2-succinylamino-6-oxoheptanedioate + CoA. It participates in amino-acid biosynthesis; L-lysine biosynthesis via DAP pathway; LL-2,6-diaminopimelate from (S)-tetrahydrodipicolinate (succinylase route): step 1/3. In terms of biological role, catalyzes the conversion of the cyclic tetrahydrodipicolinate (THDP) into the acyclic N-succinyl-L-2-amino-6-oxopimelate using succinyl-CoA. This chain is 2,3,4,5-tetrahydropyridine-2,6-dicarboxylate N-succinyltransferase, found in Pseudomonas paraeruginosa (strain DSM 24068 / PA7) (Pseudomonas aeruginosa (strain PA7)).